A 436-amino-acid chain; its full sequence is Enolase (436 aa).

Position 163 (Gln163) interacts with (2R)-2-phosphoglycerate. Glu205 serves as the catalytic Proton donor. Mg(2+)-binding residues include Asp242, Glu285, and Asp312. Positions 337, 366, 367, and 388 each coordinate (2R)-2-phosphoglycerate. The active-site Proton acceptor is Lys337.

Belongs to the enolase family. It depends on Mg(2+) as a cofactor.

Its subcellular location is the cytoplasm. It is found in the secreted. The protein localises to the cell surface. The enzyme catalyses (2R)-2-phosphoglycerate = phosphoenolpyruvate + H2O. It functions in the pathway carbohydrate degradation; glycolysis; pyruvate from D-glyceraldehyde 3-phosphate: step 4/5. Catalyzes the reversible conversion of 2-phosphoglycerate (2-PG) into phosphoenolpyruvate (PEP). It is essential for the degradation of carbohydrates via glycolysis. The protein is Enolase of Solidesulfovibrio magneticus (strain ATCC 700980 / DSM 13731 / RS-1) (Desulfovibrio magneticus).